The sequence spans 685 residues: ATP-dependent RNA helicase MSS116, mitochondrial (685 aa).

The N-terminal 34 residues, 1 to 34 (MLVLQRIPKRALQFNGVTGTVCSTRLFHHAFNLN), are a transit peptide targeting the mitochondrion. The disordered stretch occupies residues 42 to 107 (SEERRYRNSN…NNGSRRRYQD (66 aa)). The segment covering 58-69 (SDSNSNNKYRNS) has biased composition (low complexity). A compositionally biased stretch (basic and acidic residues) spans 70–86 (SYDDNRSRSNYGGDKRN). The segment covering 88–99 (RNNNNYGNNRNN) has biased composition (low complexity). Positions 138 to 166 (SLLEESLLDANVHKAISAMKFESLTPVQQ) match the Q motif motif. The Helicase ATP-binding domain occupies 170–357 (KPILTTENDV…ATIMNKKDCL (188 aa)). Residue 183–190 (AKTGTGKT) coordinates ATP. The DEAD box motif lies at 298-301 (DEAD). One can recognise a Helicase C-terminal domain in the interval 386-542 (SMVALIQSIE…EDYLNQDKEN (157 aa)). Residues 633–685 (DREFDDEDRYTSRSQNNYKSKQSSKSNRFEGRNDYSNSRRSHANQKRNFTFDD) are disordered. Low complexity predominate over residues 644-658 (SRSQNNYKSKQSSKS).

Belongs to the DEAD box helicase family. DDX18/HAS1 subfamily.

It localises to the mitochondrion matrix. The enzyme catalyses ATP + H2O = ADP + phosphate + H(+). Functionally, ATP-dependent RNA helicase required for mitochondrial splicing of group I and II introns. Also required for efficient mitochondrial translation. The sequence is that of ATP-dependent RNA helicase MSS116, mitochondrial (MSS116) from Kluyveromyces lactis (strain ATCC 8585 / CBS 2359 / DSM 70799 / NBRC 1267 / NRRL Y-1140 / WM37) (Yeast).